Consider the following 483-residue polypeptide: Glycogen synthase kinase-3 alpha (483 aa).

A compositionally biased stretch (gly residues) spans 1 to 15; that stretch reads MSGGGPSGGGPGGSG. The interval 1 to 96 is disordered; it reads MSGGGPSGGG…PPPGVKLGRD (96 aa). Position 2 is an N-acetylserine (S2). Position 2 is a phosphoserine (S2). S21 is modified (phosphoserine; by PKB/AKT1). Over residues 25–82 the composition is skewed to gly residues; it reads PGGGGGGGGGGPGGSASGPGGTGGGKASVGAMGGGVGASSSGGGPSGSGGGGSGGPGA. Residues S72, S77, and S97 each carry the phosphoserine modification. A Protein kinase domain is found at 119-403; the sequence is YTDIKVIGNG…PLEACAHSFF (285 aa). ATP contacts are provided by residues 125-133 and K148; that span reads IGNGSFGVV. The active-site Proton acceptor is the D244. The residue at position 279 (Y279) is a Phosphotyrosine. Residues 443–483 form a disordered region; the sequence is PHLRSPSGPATLTSSSQALTETQTGQDWQAPDATPTLTNSS. Residues 450–469 show a composition bias toward polar residues; that stretch reads GPATLTSSSQALTETQTGQD.

It belongs to the protein kinase superfamily. CMGC Ser/Thr protein kinase family. GSK-3 subfamily. As to quaternary structure, monomer. Interacts with ARRB2, AXIN1 and CTNNB1/beta-catenin. Interacts with CTNND2. Interacts with LMBR1L. Interacts with DDX3X. Interacts with TNFRSF10B. In terms of processing, phosphorylated by AKT1 at Ser-21: upon insulin-mediated signaling, the activated PKB/AKT1 protein kinase phosphorylates and deactivates GSK3A, resulting in the dephosphorylation and activation of GYS1. Activated by phosphorylation at Tyr-279.

It catalyses the reaction L-seryl-[tau protein] + ATP = O-phospho-L-seryl-[tau protein] + ADP + H(+). It carries out the reaction L-threonyl-[tau protein] + ATP = O-phospho-L-threonyl-[tau protein] + ADP + H(+). The enzyme catalyses L-seryl-[protein] + ATP = O-phospho-L-seryl-[protein] + ADP + H(+). The catalysed reaction is L-threonyl-[protein] + ATP = O-phospho-L-threonyl-[protein] + ADP + H(+). Its activity is regulated as follows. Activated by phosphorylation at Tyr-279. In response to insulin, inhibited by phosphorylation at Ser-21 by PKB/AKT1; phosphorylation at this site causes a conformational change, preventing access of substrates to the active site. Inhibited by lithium. Its function is as follows. Constitutively active protein kinase that acts as a negative regulator in the hormonal control of glucose homeostasis, Wnt signaling and regulation of transcription factors and microtubules, by phosphorylating and inactivating glycogen synthase (GYS1 or GYS2), CTNNB1/beta-catenin, APC and AXIN1. Requires primed phosphorylation of the majority of its substrates. Contributes to insulin regulation of glycogen synthesis by phosphorylating and inhibiting GYS1 activity and hence glycogen synthesis. Regulates glycogen metabolism in liver, but not in muscle. May also mediate the development of insulin resistance by regulating activation of transcription factors. In Wnt signaling, regulates the level and transcriptional activity of nuclear CTNNB1/beta-catenin. Facilitates amyloid precursor protein (APP) processing and the generation of APP-derived amyloid plaques found in Alzheimer disease. May be involved in the regulation of replication in pancreatic beta-cells. Is necessary for the establishment of neuronal polarity and axon outgrowth. Through phosphorylation of the anti-apoptotic protein MCL1, may control cell apoptosis in response to growth factors deprivation. Acts as a regulator of autophagy by mediating phosphorylation of KAT5/TIP60 under starvation conditions, activating KAT5/TIP60 acetyltransferase activity and promoting acetylation of key autophagy regulators, such as ULK1 and RUBCNL/Pacer. Negatively regulates extrinsic apoptotic signaling pathway via death domain receptors. Promotes the formation of an anti-apoptotic complex, made of DDX3X, BRIC2 and GSK3B, at death receptors, including TNFRSF10B. The anti-apoptotic function is most effective with weak apoptotic signals and can be overcome by stronger stimulation. This chain is Glycogen synthase kinase-3 alpha (Gsk3a), found in Rattus norvegicus (Rat).